Reading from the N-terminus, the 297-residue chain is Protease HtpX homolog (297 aa).

The helical transmembrane segment at 16–36 (IFMAIGFLVGGMAGMILAFVV) threads the bilayer. H134 provides a ligand contact to Zn(2+). Residue E135 is part of the active site. H138 contacts Zn(2+). The next 2 membrane-spanning stretches (helical) occupy residues 147–167 (MTVT…ALFF) and 175–195 (IGSI…QMAI). E200 contacts Zn(2+).

This sequence belongs to the peptidase M48B family. The cofactor is Zn(2+).

The protein localises to the cell inner membrane. The protein is Protease HtpX homolog of Hyphomonas neptunium (strain ATCC 15444).